Reading from the N-terminus, the 69-residue chain is DNA gyrase inhibitor YacG (69 aa).

4 residues coordinate Zn(2+): cysteine 7, cysteine 10, cysteine 26, and cysteine 30.

Belongs to the DNA gyrase inhibitor YacG family. In terms of assembly, interacts with GyrB. Zn(2+) is required as a cofactor.

Functionally, inhibits all the catalytic activities of DNA gyrase by preventing its interaction with DNA. Acts by binding directly to the C-terminal domain of GyrB, which probably disrupts DNA binding by the gyrase. The polypeptide is DNA gyrase inhibitor YacG (Shewanella putrefaciens (strain CN-32 / ATCC BAA-453)).